The primary structure comprises 194 residues: MKTILSSETMDIPDSVTIKVHAKVIEVEGPRGKLVRDFKHLNLDFQLIKDPETGKKKLKIDSWFGTRKTSASIRTALSHVDNLISGVTRGFRYKMRFVYAHFPINASIGGDGKSIEIRNFLGEKKVRKVEMLDGVTIVRSEKVKDEIVLDGNDIELVSRSCALINQKCHVKKKDIRKFLDGIYVSEKSKIVEEE.

T75 is modified (phosphothreonine).

The protein belongs to the universal ribosomal protein uL6 family.

The chain is Large ribosomal subunit protein uL6z/uL6y (RPL9B) from Arabidopsis thaliana (Mouse-ear cress).